A 613-amino-acid polypeptide reads, in one-letter code: Protein translocase subunit SecD (613 aa).

6 helical membrane passes run Ala-10–Phe-30, Lys-452–Tyr-472, Leu-477–Ile-497, Leu-503–Ile-523, Val-548–Gln-568, and Gly-576–Thr-596.

This sequence belongs to the SecD/SecF family. SecD subfamily. In terms of assembly, forms a complex with SecF. Part of the essential Sec protein translocation apparatus which comprises SecA, SecYEG and auxiliary proteins SecDF-YajC and YidC.

Its subcellular location is the cell inner membrane. Its function is as follows. Part of the Sec protein translocase complex. Interacts with the SecYEG preprotein conducting channel. SecDF uses the proton motive force (PMF) to complete protein translocation after the ATP-dependent function of SecA. This Anaeromyxobacter dehalogenans (strain 2CP-C) protein is Protein translocase subunit SecD.